The sequence spans 758 residues: Solute carrier family 26 member 6 (758 aa).

Topologically, residues 1 to 117 (MGLPDGSDQG…PQGLAYALLA (117 aa)) are cytoplasmic. Residues 118–138 (GLPPMFGLYSSFYPVFIYFLF) form a helical membrane-spanning segment. Residues 139–187 (GTSRHISVGTFAVMSVMVGSVTESLTADKAFVQGLNATADDARVQVAYT) are Extracellular-facing. Asn-174 carries N-linked (GlcNAc) asparagine glycosylation. The helical transmembrane segment at 188–208 (LSFLVGLFQVGLGLVHFGFVV) threads the bilayer. Topologically, residues 209–263 (TYLSEPLVRSYTTAASVQVLVSQLKYVFGIKLSSHSGPLSVIYTVLEVCAQLPET) are cytoplasmic. The helical transmembrane segment at 264 to 284 (VPGTVVTAIVAGVALVLVKLL) threads the bilayer. At 285-292 (NEKLHRRL) the chain is on the extracellular side. A helical transmembrane segment spans residues 293–313 (PLPIPGELLTLIGATGISYGV). Topologically, residues 314–340 (KLNDRFKVDVVGNITTGLIPPVAPKTE) are cytoplasmic. Residues 341-361 (LFATLVGNAFAIAVVGFAIAI) traverse the membrane as a helical segment. The Extracellular segment spans residues 362–380 (SLGKIFALRHGYRVDSNQE). A helical transmembrane segment spans residues 381 to 401 (LVALGLSNLIGGFFQCFPVSC). Topologically, residues 402–417 (SMSRSLVQESTGGNTQ) are cytoplasmic. Residues 418-438 (VAGAVSSLFILLIIVKLGELF) form a helical membrane-spanning segment. The Extracellular portion of the chain corresponds to 439–485 (RDLPKAVLAAVIIVNLKGMMKQFSDICSLWKANRVDLLIWLVTFVAT). A helical membrane pass occupies residues 486-506 (ILLNLDIGLAVSIVFSLLLVV). Residues 507 to 758 (VRMQLPHYSV…PKSPVLATKL (252 aa)) are Cytoplasmic-facing. One can recognise an STAS domain in the interval 531–741 (EYSGAKEVPG…ASVHDAVTFA (211 aa)). The segment at 585–608 (EMKLKRMKKAKKSQKQDASSKISS) is disordered. Position 751 is a phosphoserine (Ser-751).

In terms of assembly, interacts (via C-terminal domain) with PDZK1 (via C-terminal PDZ domain); the interaction induces chloride and oxalate exchange transport. Interacts with CFTR, SLC26A3 and NHERF1. Interacts with AHCYL1; the interaction increases SLC26A6 activity. N-glycosylated. Glycosylation at Asn-174 positively regulates its chloride oxalate exchanger activity. As to expression, expressed in kidney (at protein level). Expressed in spermatogenic cells. Expressed in intestine, kidney, testis, brain, muscle, heart, and stomach. Expressed in the submandibular and sublingual salivary glands. Highly expressed in stomach, kidney, heart and small intestine, low in the lung, liver, testis, brain, skeletal muscle and colon. In terms of tissue distribution, expressed in the heart.

The protein localises to the cell membrane. It is found in the apical cell membrane. The protein resides in the cytoplasmic vesicle membrane. It localises to the microsome. The catalysed reaction is 2 hydrogencarbonate(in) + chloride(out) = 2 hydrogencarbonate(out) + chloride(in). It catalyses the reaction oxalate(in) + chloride(out) = oxalate(out) + chloride(in). It carries out the reaction oxalate(in) + formate(out) = oxalate(out) + formate(in). The enzyme catalyses oxalate(in) + sulfate(out) = oxalate(out) + sulfate(in). The catalysed reaction is formate(in) + chloride(out) = formate(out) + chloride(in). It catalyses the reaction sulfate(in) = sulfate(out). With respect to regulation, apical membrane chloride-bicarbonate exchange activity of the pancreatic duct is inhibited by 4,4'-diisothiocyanatostilbene-2,2'-disulfonic acid (DIDS). Oxalate secretion in the duodenum and chloride-formate exchange activity is inhibited by DIDS. Its activity is regulated as follows. Chloride-formate exchange activity and transcellular sulfate absorption is inhibited by 4,4'-diisothiocyanatostilbene-2,2'-disulfonic acid (DIDS). Its function is as follows. Apical membrane anion-exchanger with wide epithelial distribution that plays a role as a component of the pH buffering system for maintaining acid-base homeostasis. Acts as a versatile DIDS-sensitive inorganic and organic anion transporter that mediates the uptake of monovalent anions like chloride, bicarbonate, formate and hydroxyl ion and divalent anions like sulfate and oxalate. Functions in multiple exchange modes involving pairs of these anions, which include chloride-bicarbonate, chloride-oxalate, oxalate-formate, oxalate-sulfate and chloride-formate exchange. Apical membrane chloride-bicarbonate exchanger that mediates luminal chloride absorption and bicarbonate secretion by the small intestinal brush border membrane and contributes to intracellular pH regulation in the duodenal upper villous epithelium during proton-coupled peptide absorption, possibly by providing a bicarbonate import pathway. Its association with carbonic anhydrase CA2 forms a bicarbonate transport metabolon; hence maximizes the local concentration of bicarbonate at the transporter site. Also mediates intestinal chloride absorption and oxalate secretion, thereby preventing hyperoxaluria and calcium oxalate urolithiasis. Transepithelial oxalate secretion, chloride-formate, chloride-oxalate and chloride-bicarbonate transport activities in the duodenum are inhibited by PKC activation in a calcium-independent manner. The apical membrane chloride-bicarbonate exchanger also provides a major route for fluid and bicarbonate secretion into the proximal tubules of the kidney as well as into the proximal part of the interlobular pancreatic ductal tree, where it mediates electrogenic chloride-bicarbonate exchange with a chloride-bicarbonate stoichiometry of 1:2, and hence will dilute and alkalinize protein-rich acinar secretion. Also mediates the transcellular sulfate absorption and oxalate secretion across the apical membrane in the duodenum and the formate ion efflux at the apical brush border of cells in the proximal tubules of kidney. Plays a role in sperm capacitation by increasing intracellular pH. Functionally, mediates electrogenic chloride-bicarbonate exchange with a chloride-bicarbonate stoichiometry of 1:2. Also mediates exchange of chloride-formate and chloride-oxalate ions. Mediates transcellular sulfate absorption. The chain is Solute carrier family 26 member 6 from Mus musculus (Mouse).